The following is a 574-amino-acid chain: Isocitrate dehydrogenase kinase/phosphatase (574 aa).

ATP contacts are provided by residues 315–321 and Lys336; that span reads APGIRGM. Asp371 is an active-site residue.

This sequence belongs to the AceK family.

It is found in the cytoplasm. The enzyme catalyses L-seryl-[isocitrate dehydrogenase] + ATP = O-phospho-L-seryl-[isocitrate dehydrogenase] + ADP + H(+). In terms of biological role, bifunctional enzyme which can phosphorylate or dephosphorylate isocitrate dehydrogenase (IDH) on a specific serine residue. This is a regulatory mechanism which enables bacteria to bypass the Krebs cycle via the glyoxylate shunt in response to the source of carbon. When bacteria are grown on glucose, IDH is fully active and unphosphorylated, but when grown on acetate or ethanol, the activity of IDH declines drastically concomitant with its phosphorylation. The sequence is that of Isocitrate dehydrogenase kinase/phosphatase from Escherichia coli O127:H6 (strain E2348/69 / EPEC).